The sequence spans 55 residues: ATP synthase F(0) complex subunit 8 (55 aa).

Residues 4-24 (LNPSPWLLILLFSWLIFLTML) traverse the membrane as a helical segment. Residues 36–55 (MPSTQNMCKQEPEPWTWPWA) are disordered.

Belongs to the ATPase protein 8 family. As to quaternary structure, component of the ATP synthase complex composed at least of ATP5F1A/subunit alpha, ATP5F1B/subunit beta, ATP5MC1/subunit c (homooctomer), MT-ATP6/subunit a, MT-ATP8/subunit 8, ATP5ME/subunit e, ATP5MF/subunit f, ATP5MG/subunit g, ATP5MK/subunit k, ATP5MJ/subunit j, ATP5F1C/subunit gamma, ATP5F1D/subunit delta, ATP5F1E/subunit epsilon, ATP5PF/subunit F6, ATP5PB/subunit b, ATP5PD/subunit d, ATP5PO/subunit OSCP. ATP synthase complex consists of a soluble F(1) head domain (subunits alpha(3) and beta(3)) - the catalytic core - and a membrane F(0) domain - the membrane proton channel (subunits c, a, 8, e, f, g, k and j). These two domains are linked by a central stalk (subunits gamma, delta, and epsilon) rotating inside the F1 region and a stationary peripheral stalk (subunits F6, b, d, and OSCP).

The protein localises to the mitochondrion membrane. Functionally, subunit 8, of the mitochondrial membrane ATP synthase complex (F(1)F(0) ATP synthase or Complex V) that produces ATP from ADP in the presence of a proton gradient across the membrane which is generated by electron transport complexes of the respiratory chain. ATP synthase complex consist of a soluble F(1) head domain - the catalytic core - and a membrane F(1) domain - the membrane proton channel. These two domains are linked by a central stalk rotating inside the F(1) region and a stationary peripheral stalk. During catalysis, ATP synthesis in the catalytic domain of F(1) is coupled via a rotary mechanism of the central stalk subunits to proton translocation. In vivo, can only synthesize ATP although its ATP hydrolase activity can be activated artificially in vitro. Part of the complex F(0) domain. This chain is ATP synthase F(0) complex subunit 8, found in Latimeria chalumnae (Coelacanth).